Reading from the N-terminus, the 634-residue chain is 1-deoxy-D-xylulose-5-phosphate synthase (634 aa).

Thiamine diphosphate-binding positions include H73 and 114–116 (GHS). D145 contacts Mg(2+). Thiamine diphosphate is bound by residues 146–147 (GS), N174, F285, and E367. Mg(2+) is bound at residue N174.

Belongs to the transketolase family. DXPS subfamily. As to quaternary structure, homodimer. The cofactor is Mg(2+). Thiamine diphosphate serves as cofactor.

The enzyme catalyses D-glyceraldehyde 3-phosphate + pyruvate + H(+) = 1-deoxy-D-xylulose 5-phosphate + CO2. It participates in metabolic intermediate biosynthesis; 1-deoxy-D-xylulose 5-phosphate biosynthesis; 1-deoxy-D-xylulose 5-phosphate from D-glyceraldehyde 3-phosphate and pyruvate: step 1/1. Catalyzes the acyloin condensation reaction between C atoms 2 and 3 of pyruvate and glyceraldehyde 3-phosphate to yield 1-deoxy-D-xylulose-5-phosphate (DXP). This is 1-deoxy-D-xylulose-5-phosphate synthase from Syntrophotalea carbinolica (strain DSM 2380 / NBRC 103641 / GraBd1) (Pelobacter carbinolicus).